A 589-amino-acid polypeptide reads, in one-letter code: MLSRTVPRCVKYGSTPKDIRYGMEARNALLAGVENLVKAVGVTLGPKGRNVILEMPYACPKITKDGVTVAKSIEFEDSFENLGANLVRQVAGLTNDNAGDGTTTATVLSGAIFKEGFRSVASGTNPMDLKRGIDLACREVLISLAEQSRPVTSKSEITQVAMISANMDQEIGSLIGDAMQQVGKDGVITTQEGRSLNTELELVEGMSFERGYTSPYFVTNTKAQRCELENALVYVANRKLTSVAHILPALNYAIQQKRPLLVIAEDVEGEAMHTFLYNKIQGRISGCAVKAPGFGDMRINQLQDIAVFTGSQMISEDLGLSLDQNDFSERFLGTCRKVTVSRDECILMEGGGSAIAVEERVQMIKDMISAEDHEYNRERLVERLAKLSGGVAVIKVGGASEVEINEKKDRIIDALNATRAAVSEGILAGGGTGLLMASLRLESISKDRRLPPDIRTGVNIVKKAIGLPARYIANNAGVEGSVVAGKVLARKDPSFGYNAQTGEYVNMFEAGIIDPMKVVKSAVVNACSVAGMMITTEAAVVEKDLLGREKRIEDEGMEDKEKKRSVDKLRKQVNEAGRTDAQDGAADEV.

A compositionally biased stretch (basic and acidic residues) spans 550–581 (KRIEDEGMEDKEKKRSVDKLRKQVNEAGRTDA). Residues 550 to 589 (KRIEDEGMEDKEKKRSVDKLRKQVNEAGRTDAQDGAADEV) form a disordered region.

The protein belongs to the chaperonin (HSP60) family.

Its subcellular location is the mitochondrion matrix. In terms of biological role, implicated in mitochondrial protein import and macromolecular assembly. May facilitate the correct folding of imported proteins. May also prevent misfolding and promote the refolding and proper assembly of unfolded polypeptides generated under stress conditions in the mitochondrial matrix. The sequence is that of Chaperonin HSP60, mitochondrial (HSP60) from Leishmania major.